The primary structure comprises 626 residues: Forkhead box protein O1 (626 aa).

Positions 1–11 (MAEAPLPPPPG) are enriched in pro residues. Disordered stretches follow at residues 1–57 (MAEA…PAAG), 90–142 (DIRQ…SRRN), 218–319 (SSWW…MPEQ), and 484–519 (PTYG…MTHN). Composition is skewed to low complexity over residues 37 to 48 (NPSSSANSSPAP) and 101 to 133 (QHPQ…AQQP). Positions 144 to 238 (WGNLSYADLI…KNGKSPRRRA (95 aa)) form a DNA-binding region, fork-head. Basic residues predominate over residues 248 to 259 (AKSRGRAAKKKA). Low complexity predominate over residues 262–277 (QSSQDGSSDSPGSQFS). Polar residues-rich tracts occupy residues 298–310 (RPRT…TISG) and 484–494 (PTYGSQPTHNK).

In terms of processing, phosphorylated by AKT1; insulin-induced. Post-translationally, IGF1 rapidly induces phosphorylation of Thr-28, Ser-240 and Ser-303. Phosphorylation of Ser-240 decreases DNA-binding activity and promotes the phosphorylation of Thr-28, and Ser-303, which leads to nuclear exclusion and loss of function. Phosphorylation of Ser-313 is independent of IGF1 and leads to reduced function.

The protein localises to the cytoplasm. Its subcellular location is the nucleus. Functionally, transcription factor that regulates metabolic homeostasis in response to oxidative stress. Binds to the consensus sequence 5'-TT[G/A]TTTTG-3' and the related Daf-16 family binding element (DBE) with consensus sequence 5'-TT[G/A]TTTAC-3'. Main regulator of redox balance and osteoblast numbers and controls bone mass. Orchestrates the endocrine function of the skeleton in regulating glucose metabolism. Also acts as a key regulator of chondrogenic commitment of skeletal progenitor cells in response to lipid availability: when lipids levels are low, translocates to the nucleus and promotes expression of sox9, which induces chondrogenic commitment and suppresses fatty acid oxidation. Acts synergistically with atf4 to suppress osteocalcin/bglap activity, increasing glucose levels and triggering glucose intolerance and insulin insensitivity. Also suppresses the transcriptional activity of runx2, an upstream activator of osteocalcin/bglap. May act as a positive regulator of apoptosis in cardiac smooth muscle cells as a result of its transcriptional activation of pro-apoptotic genes. In Xenopus tropicalis (Western clawed frog), this protein is Forkhead box protein O1.